Reading from the N-terminus, the 336-residue chain is Sex determination protein tasselseed-2 (336 aa).

Position 59–83 (59–83 (IVTGGARGIGEAIVRLFAKHGARVV)) interacts with NAD(+). Serine 194 contacts substrate. Tyrosine 207 functions as the Proton acceptor in the catalytic mechanism.

This sequence belongs to the short-chain dehydrogenases/reductases (SDR) family.

Its function is as follows. Required for stage-specific floral organ abortion. This is Sex determination protein tasselseed-2 (TS2) from Zea mays (Maize).